The sequence spans 184 residues: MKNVTDSFVYLGHWPSAGSFGFNTDILATNLINLSVVFGVLIFFGKGVLNDLLDNRKQRILNTIRNSEELREGAIQQLENARARLRKVEKEADQFRVNGYSEIEREKLNLINSTYRTLKQLENYKNETILFEQQRTINQVRERVFQQALQGAIVTLKSCLSNELHLRTINANIGMFGTMKEITD.

The helical transmembrane segment at 27–49 threads the bilayer; the sequence is LATNLINLSVVFGVLIFFGKGVL.

This sequence belongs to the ATPase B chain family. In terms of assembly, F-type ATPases have 2 components, F(1) - the catalytic core - and F(0) - the membrane proton channel. F(1) has five subunits: alpha(3), beta(3), gamma(1), delta(1), epsilon(1). F(0) has four main subunits: a(1), b(1), b'(1) and c(10-14). The alpha and beta chains form an alternating ring which encloses part of the gamma chain. F(1) is attached to F(0) by a central stalk formed by the gamma and epsilon chains, while a peripheral stalk is formed by the delta, b and b' chains.

The protein resides in the plastid. It is found in the chloroplast thylakoid membrane. In terms of biological role, f(1)F(0) ATP synthase produces ATP from ADP in the presence of a proton or sodium gradient. F-type ATPases consist of two structural domains, F(1) containing the extramembraneous catalytic core and F(0) containing the membrane proton channel, linked together by a central stalk and a peripheral stalk. During catalysis, ATP synthesis in the catalytic domain of F(1) is coupled via a rotary mechanism of the central stalk subunits to proton translocation. Component of the F(0) channel, it forms part of the peripheral stalk, linking F(1) to F(0). The protein is ATP synthase subunit b, chloroplastic of Aethionema cordifolium (Lebanon stonecress).